Reading from the N-terminus, the 209-residue chain is Ribosomal RNA large subunit methyltransferase E (209 aa).

5 residues coordinate S-adenosyl-L-methionine: Gly-63, Trp-65, Asp-83, Asp-99, and Asp-124. Residue Lys-164 is the Proton acceptor of the active site.

This sequence belongs to the class I-like SAM-binding methyltransferase superfamily. RNA methyltransferase RlmE family.

The protein resides in the cytoplasm. The catalysed reaction is uridine(2552) in 23S rRNA + S-adenosyl-L-methionine = 2'-O-methyluridine(2552) in 23S rRNA + S-adenosyl-L-homocysteine + H(+). Its function is as follows. Specifically methylates the uridine in position 2552 of 23S rRNA at the 2'-O position of the ribose in the fully assembled 50S ribosomal subunit. This chain is Ribosomal RNA large subunit methyltransferase E, found in Yersinia pseudotuberculosis serotype O:1b (strain IP 31758).